Consider the following 556-residue polypeptide: Membrane protein insertase YidC (556 aa).

The next 5 membrane-spanning stretches (helical) occupy residues 6 to 26 (IVLY…WQID), 332 to 352 (LDLT…FSLM), 358 to 378 (VVGN…LAFY), 428 to 448 (LGGC…YWVL), and 501 to 521 (VMMF…SGLV).

This sequence belongs to the OXA1/ALB3/YidC family. Type 1 subfamily. As to quaternary structure, interacts with the Sec translocase complex via SecD. Specifically interacts with transmembrane segments of nascent integral membrane proteins during membrane integration.

Its subcellular location is the cell inner membrane. Functionally, required for the insertion and/or proper folding and/or complex formation of integral membrane proteins into the membrane. Involved in integration of membrane proteins that insert both dependently and independently of the Sec translocase complex, as well as at least some lipoproteins. Aids folding of multispanning membrane proteins. The chain is Membrane protein insertase YidC from Legionella pneumophila (strain Lens).